The following is a 903-amino-acid chain: Protein translocase subunit SecA (903 aa).

Residues Gln-85, 103 to 107, and Asp-492 contribute to the ATP site; that span reads GEGKT. The disordered stretch occupies residues 863 to 890; the sequence is GDGVKQPVRRDKKVGRNSPCPCGSGKKY. Zn(2+) is bound by residues Cys-882, Cys-884, Cys-893, and Cys-894.

Belongs to the SecA family. As to quaternary structure, monomer and homodimer. Part of the essential Sec protein translocation apparatus which comprises SecA, SecYEG and auxiliary proteins SecDF. Other proteins may also be involved. Zn(2+) is required as a cofactor.

The protein resides in the cell membrane. The protein localises to the cytoplasm. The catalysed reaction is ATP + H2O + cellular proteinSide 1 = ADP + phosphate + cellular proteinSide 2.. Part of the Sec protein translocase complex. Interacts with the SecYEG preprotein conducting channel. Has a central role in coupling the hydrolysis of ATP to the transfer of proteins into and across the cell membrane, serving as an ATP-driven molecular motor driving the stepwise translocation of polypeptide chains across the membrane. This is Protein translocase subunit SecA from Desulforudis audaxviator (strain MP104C).